Reading from the N-terminus, the 107-residue chain is MSISLSESAAQRVSAFIANRGKGLGLRLGVRTSGCSGMAYVLEFVDDLNDGDTVFEDKGIKVIVDGKSLVYLDGTELDFVKEGLNEGFKFNNPNSSGECGCGESFNV.

Residues Cys-35, Cys-99, and Cys-101 each contribute to the Fe cation site.

This sequence belongs to the HesB/IscA family. As to quaternary structure, homodimer; may form tetramers and higher multimers. It depends on Fe cation as a cofactor.

Functionally, is able to transfer iron-sulfur clusters to apo-ferredoxin. Multiple cycles of [2Fe2S] cluster formation and transfer are observed, suggesting that IscA acts catalytically. Recruits intracellular free iron so as to provide iron for the assembly of transient iron-sulfur cluster in IscU in the presence of IscS, L-cysteine and the thioredoxin reductase system TrxA/TrxB. This Pectobacterium carotovorum subsp. carotovorum (strain PC1) protein is Iron-binding protein IscA.